We begin with the raw amino-acid sequence, 154 residues long: Myoglobin (154 aa).

The 147-residue stretch at 2–148 (GLSDGEWQLV…FRNDIAAKYK (147 aa)) folds into the Globin domain. Ser4 carries the phosphoserine modification. His65 provides a ligand contact to nitrite. Position 65 (His65) interacts with O2. Position 68 is a phosphothreonine (Thr68). His94 serves as a coordination point for heme b.

Belongs to the globin family. As to quaternary structure, monomeric.

It localises to the cytoplasm. It is found in the sarcoplasm. It carries out the reaction Fe(III)-heme b-[protein] + nitric oxide + H2O = Fe(II)-heme b-[protein] + nitrite + 2 H(+). The catalysed reaction is H2O2 + AH2 = A + 2 H2O. In terms of biological role, monomeric heme protein which primary function is to store oxygen and facilitate its diffusion within muscle tissues. Reversibly binds oxygen through a pentacoordinated heme iron and enables its timely and efficient release as needed during periods of heightened demand. Depending on the oxidative conditions of tissues and cells, and in addition to its ability to bind oxygen, it also has a nitrite reductase activity whereby it regulates the production of bioactive nitric oxide. Under stress conditions, like hypoxia and anoxia, it also protects cells against reactive oxygen species thanks to its pseudoperoxidase activity. The polypeptide is Myoglobin (MB) (Lepilemur mustelinus (Weasel sportive lemur)).